We begin with the raw amino-acid sequence, 283 residues long: NAD kinase (283 aa).

The active-site Proton acceptor is the Asp66. Residues 66-67 (DG), 137-138 (ND), Arg165, Asp167, and 178-183 (TGYSLS) contribute to the NAD(+) site.

Belongs to the NAD kinase family. A divalent metal cation serves as cofactor.

It is found in the cytoplasm. The catalysed reaction is NAD(+) + ATP = ADP + NADP(+) + H(+). In terms of biological role, involved in the regulation of the intracellular balance of NAD and NADP, and is a key enzyme in the biosynthesis of NADP. Catalyzes specifically the phosphorylation on 2'-hydroxyl of the adenosine moiety of NAD to yield NADP. The sequence is that of NAD kinase from Chloroherpeton thalassium (strain ATCC 35110 / GB-78).